We begin with the raw amino-acid sequence, 150 residues long: Large ribosomal subunit protein bL9 (150 aa).

It belongs to the bacterial ribosomal protein bL9 family.

Binds to the 23S rRNA. This Pseudoalteromonas atlantica (strain T6c / ATCC BAA-1087) protein is Large ribosomal subunit protein bL9.